A 940-amino-acid chain; its full sequence is Isoleucine--tRNA ligase (940 aa).

The 'HIGH' region signature appears at 58 to 68 (PYANGDIHIGH). Glu564 is an L-isoleucyl-5'-AMP binding site. Positions 605 to 609 (KMSKS) match the 'KMSKS' region motif. Lys608 serves as a coordination point for ATP. Zn(2+) is bound by residues Cys903, Cys906, Cys923, and Cys926.

It belongs to the class-I aminoacyl-tRNA synthetase family. IleS type 1 subfamily. As to quaternary structure, monomer. It depends on Zn(2+) as a cofactor.

It localises to the cytoplasm. The enzyme catalyses tRNA(Ile) + L-isoleucine + ATP = L-isoleucyl-tRNA(Ile) + AMP + diphosphate. Its function is as follows. Catalyzes the attachment of isoleucine to tRNA(Ile). As IleRS can inadvertently accommodate and process structurally similar amino acids such as valine, to avoid such errors it has two additional distinct tRNA(Ile)-dependent editing activities. One activity is designated as 'pretransfer' editing and involves the hydrolysis of activated Val-AMP. The other activity is designated 'posttransfer' editing and involves deacylation of mischarged Val-tRNA(Ile). The sequence is that of Isoleucine--tRNA ligase from Shewanella pealeana (strain ATCC 700345 / ANG-SQ1).